The sequence spans 405 residues: 2,3-diketo-5-methylthiopentyl-1-phosphate enolase (405 aa).

Lys-91 serves as the catalytic Proton acceptor. Substrate-binding positions include Lys-140, 166-169 (KDDE), His-257, Gly-329, and 351-352 (GG). Lys-166, Asp-168, and Glu-169 together coordinate Mg(2+). Lys-166 is modified (N6-carboxylysine).

The protein belongs to the RuBisCO large chain family. Type IV subfamily. In terms of assembly, homodimer. Mg(2+) serves as cofactor.

It catalyses the reaction 5-methylsulfanyl-2,3-dioxopentyl phosphate = 2-hydroxy-5-methylsulfanyl-3-oxopent-1-enyl phosphate. The protein operates within amino-acid biosynthesis; L-methionine biosynthesis via salvage pathway; L-methionine from S-methyl-5-thio-alpha-D-ribose 1-phosphate: step 3/6. Functionally, catalyzes the enolization of 2,3-diketo-5-methylthiopentyl-1-phosphate (DK-MTP-1-P) into 2-hydroxy-3-keto-5-methylthiopentenyl-1-phosphate (HK-MTPenyl-1-P). In Bacillus licheniformis (strain ATCC 14580 / DSM 13 / JCM 2505 / CCUG 7422 / NBRC 12200 / NCIMB 9375 / NCTC 10341 / NRRL NRS-1264 / Gibson 46), this protein is 2,3-diketo-5-methylthiopentyl-1-phosphate enolase.